The following is a 35-amino-acid chain: Mu-theraphotoxin-Ca2a (35 aa).

3 disulfides stabilise this stretch: C2–C17, C9–C24, and C16–C31.

The protein belongs to the neurotoxin 10 (Hwtx-1) family. 10 (haplotoxin-1) subfamily. Expressed by the venom gland.

The protein localises to the secreted. Functionally, potently inhibits Nav1.7/SCN9A (IC(50)=98.1 nM), and moderately inhibits Nav1.2/SCN2A (IC(50)=216.3 nM), Nav1.6/SCN8A (IC(50)=313.6 nM), and Nav1.3/SCN3A (IC(50)=491.3 nM). Hyperpolarizes the slow inactivation, but does not alter the voltage-dependent activation or fast inactivation of Nav1.7/SCN9A. Binds with Nav1.7/SCN9A at the extracellular S3-S4 linker of domain II (site 4). In vivo, exhibits dose-dependent analgesic efficacy by reducing pain responses in rodent models of formalin-induced paw licking, hot plate test, and acetic acid-induced writhing. The protein is Mu-theraphotoxin-Ca2a of Cyriopagopus albostriatus (Cambodian tiger tarantula).